The sequence spans 127 residues: MWIWYSLLFFGVCHLAHSTSTVDDALTCHGEKLAEEVLNELKEHFGPHWEEKVPELIEKLNAIGENLQLEKNEDKPSIGGNPWENTDMMLRFKWKKVLHKVGHVAGKIAIGAASNIAAKAVMGALGK.

Residues 1 to 18 (MWIWYSLLFFGVCHLAHS) form the signal peptide.

As to expression, expressed by the venom gland (anterior main gland) (at protein level).

It localises to the secreted. This is Venom protein family 16 protein 1 from Platymeris rhadamanthus (Red spot assassin bug).